The following is a 478-amino-acid chain: Glutamate--tRNA ligase (478 aa).

The short motif at 8-18 (PSPTGYLHLGN) is the 'HIGH' region element. The 'KMSKS' region signature appears at 248 to 252 (KLSKR). Lysine 251 serves as a coordination point for ATP.

Belongs to the class-I aminoacyl-tRNA synthetase family. Glutamate--tRNA ligase type 1 subfamily. Monomer.

Its subcellular location is the cytoplasm. It catalyses the reaction tRNA(Glu) + L-glutamate + ATP = L-glutamyl-tRNA(Glu) + AMP + diphosphate. In terms of biological role, catalyzes the attachment of glutamate to tRNA(Glu) in a two-step reaction: glutamate is first activated by ATP to form Glu-AMP and then transferred to the acceptor end of tRNA(Glu). The chain is Glutamate--tRNA ligase from Sulfurihydrogenibium sp. (strain YO3AOP1).